Reading from the N-terminus, the 445-residue chain is Phosphoglucosamine mutase (445 aa).

Ser102 functions as the Phosphoserine intermediate in the catalytic mechanism. Mg(2+) contacts are provided by Ser102, Asp241, Asp243, and Asp245. Ser102 bears the Phosphoserine mark.

This sequence belongs to the phosphohexose mutase family. It depends on Mg(2+) as a cofactor. Activated by phosphorylation.

It catalyses the reaction alpha-D-glucosamine 1-phosphate = D-glucosamine 6-phosphate. In terms of biological role, catalyzes the conversion of glucosamine-6-phosphate to glucosamine-1-phosphate. The protein is Phosphoglucosamine mutase of Escherichia coli O157:H7.